We begin with the raw amino-acid sequence, 57 residues long: Small ribosomal subunit protein bS21 (57 aa).

Residues 31–57 are disordered; that stretch reads EVRKRKHYEKPSVRRKKKSEAARKRKF. Positions 33 to 57 are enriched in basic residues; that stretch reads RKRKHYEKPSVRRKKKSEAARKRKF.

The protein belongs to the bacterial ribosomal protein bS21 family.

The protein is Small ribosomal subunit protein bS21 (rpsU) of Halalkalibacterium halodurans (strain ATCC BAA-125 / DSM 18197 / FERM 7344 / JCM 9153 / C-125) (Bacillus halodurans).